Consider the following 210-residue polypeptide: Protein-L-isoaspartate O-methyltransferase (210 aa).

Ser-60 is an active-site residue.

It belongs to the methyltransferase superfamily. L-isoaspartyl/D-aspartyl protein methyltransferase family.

Its subcellular location is the cytoplasm. The enzyme catalyses [protein]-L-isoaspartate + S-adenosyl-L-methionine = [protein]-L-isoaspartate alpha-methyl ester + S-adenosyl-L-homocysteine. Its function is as follows. Catalyzes the methyl esterification of L-isoaspartyl residues in peptides and proteins that result from spontaneous decomposition of normal L-aspartyl and L-asparaginyl residues. It plays a role in the repair and/or degradation of damaged proteins. This chain is Protein-L-isoaspartate O-methyltransferase, found in Xylella fastidiosa (strain M12).